Here is a 146-residue protein sequence, read N- to C-terminus: Large ribosomal subunit protein uL15 (146 aa).

Over residues 1–13 (MKLHELKAAEGSR) the composition is skewed to basic and acidic residues. The disordered stretch occupies residues 1-56 (MKLHELKAAEGSRRVRNRVGRGAGSGNGKTSGRGQKGQKARSGGGVRPGFEGGQLP). Gly residues-rich tracts occupy residues 21 to 35 (RGAG…GRGQ) and 42 to 52 (SGGGVRPGFEG).

The protein belongs to the universal ribosomal protein uL15 family. As to quaternary structure, part of the 50S ribosomal subunit.

Functionally, binds to the 23S rRNA. The protein is Large ribosomal subunit protein uL15 of Staphylococcus haemolyticus (strain JCSC1435).